The chain runs to 360 residues: 45 kDa calcium-binding protein (360 aa).

Residues 1–29 form the signal peptide; that stretch reads MVSKQAFLFSLGSLYLSLLFVFLLMDVYA. N-linked (GlcNAc...) asparagine glycosylation occurs at Asn33. 5 consecutive EF-hand domains span residues 96–131, 135–170, 231–266, 276–311, and 312–347; these read RNRR…KTEE, EAVN…SKGF, MLKF…TVEN, WVRD…MNEY, and NALN…FTGS. Asp109, Asn111, Asp113, Gln115, Glu120, Asp148, Asp150, Asp152, His154, Glu159, Asp244, Asp246, Asp248, Lys250, Glu255, Asp289, Asn291, Asp293, Glu300, Asp325, Asn327, Asp329, His331, and Glu336 together coordinate Ca(2+).

It belongs to the CREC family.

It is found in the golgi apparatus lumen. May regulate calcium-dependent activities in the endoplasmic reticulum lumen or post-ER compartment. The protein is 45 kDa calcium-binding protein (sdf4) of Xenopus tropicalis (Western clawed frog).